A 439-amino-acid chain; its full sequence is Serine/threonine-protein kinase 2 (439 aa).

One can recognise a Protein kinase domain in the interval 87–439 (NDDFYHISTG…IFSDWINGGN (353 aa)). Residues 93-101 (ISTGGYGIV) and Lys-117 contribute to the ATP site. The Proton acceptor role is filled by Asp-307.

Belongs to the protein kinase superfamily. Ser/Thr protein kinase family. In terms of processing, phosphorylated in vivo. Autophosphorylated in vitro.

The protein resides in the host endoplasmic reticulum. Its subcellular location is the host endoplasmic reticulum-Golgi intermediate compartment. The enzyme catalyses L-seryl-[protein] + ATP = O-phospho-L-seryl-[protein] + ADP + H(+). The catalysed reaction is L-threonyl-[protein] + ATP = O-phospho-L-threonyl-[protein] + ADP + H(+). In terms of biological role, essential serine-protein kinase involved in the early stage of virion morphogenesis. This is Serine/threonine-protein kinase 2 (OPG054) from Bos taurus (Bovine).